A 347-amino-acid chain; its full sequence is Ribosomal RNA small subunit methyltransferase C (347 aa).

This sequence belongs to the methyltransferase superfamily. RsmC family. Monomer.

It localises to the cytoplasm. It catalyses the reaction guanosine(1207) in 16S rRNA + S-adenosyl-L-methionine = N(2)-methylguanosine(1207) in 16S rRNA + S-adenosyl-L-homocysteine + H(+). Functionally, specifically methylates the guanine in position 1207 of 16S rRNA in the 30S particle. The protein is Ribosomal RNA small subunit methyltransferase C of Shewanella baltica (strain OS195).